The chain runs to 347 residues: UDP-N-acetylenolpyruvoylglucosamine reductase (347 aa).

One can recognise an FAD-binding PCMH-type domain in the interval 15-187; it reads FGIEQTCSYL…TAIGLKLPKR (173 aa). R163 is an active-site residue. S233 serves as the catalytic Proton donor. E328 is a catalytic residue.

Belongs to the MurB family. It depends on FAD as a cofactor.

The protein resides in the cytoplasm. The catalysed reaction is UDP-N-acetyl-alpha-D-muramate + NADP(+) = UDP-N-acetyl-3-O-(1-carboxyvinyl)-alpha-D-glucosamine + NADPH + H(+). It functions in the pathway cell wall biogenesis; peptidoglycan biosynthesis. In terms of biological role, cell wall formation. This Vibrio parahaemolyticus serotype O3:K6 (strain RIMD 2210633) protein is UDP-N-acetylenolpyruvoylglucosamine reductase.